The primary structure comprises 557 residues: CDP-diacylglycerol--glycerol-3-phosphate 3-phosphatidyltransferase, mitochondrial (557 aa).

The transit peptide at 1 to 25 (MAAAGGAALWRRLAAWLPRGPPGLA) directs the protein to the mitochondrion. 121 to 128 (ASLYLGTG) serves as a coordination point for ATP. The 27-residue stretch at 212 to 238 (TIGLQHIKVYLFDDNVILSGANLSDLY) folds into the PLD phosphodiesterase 1 domain. Residues His-217, Lys-219, and Asp-224 contribute to the active site. The segment at 322-346 (TFHSSQQGSSMLPQHDSEASEGLKP) is disordered. Positions 323 to 333 (FHSSQQGSSML) are enriched in polar residues. Over residues 336–346 (HDSEASEGLKP) the composition is skewed to basic and acidic residues. One can recognise a PLD phosphodiesterase 2 domain in the interval 461 to 494 (AGWTFHAKGLWLYLAGSSLPCLTLIGSPNFGYRS).

The protein belongs to the CDP-alcohol phosphatidyltransferase class-II family.

The protein localises to the mitochondrion. The enzyme catalyses a CDP-1,2-diacyl-sn-glycerol + sn-glycerol 3-phosphate = a 1,2-diacyl-sn-glycero-3-phospho-(1'-sn-glycero-3'-phosphate) + CMP + H(+). It functions in the pathway phospholipid metabolism; phosphatidylglycerol biosynthesis; phosphatidylglycerol from CDP-diacylglycerol: step 1/2. Its activity is regulated as follows. Activated by calcium and magnesium and inhibited by other bivalent cations. In terms of biological role, functions in the biosynthesis of the anionic phospholipids phosphatidylglycerol and cardiolipin. The chain is CDP-diacylglycerol--glycerol-3-phosphate 3-phosphatidyltransferase, mitochondrial (PGS1) from Gallus gallus (Chicken).